The sequence spans 75 residues: High-potential iron-sulfur protein (75 aa).

Residues cysteine 38, cysteine 41, cysteine 54, and cysteine 68 each coordinate [4Fe-4S] cluster.

As to quaternary structure, homodimer. Monomer at different ionic strengths.

In terms of biological role, specific class of high-redox-potential 4Fe-4S ferredoxins. Functions in anaerobic electron transport in most purple and in some other photosynthetic bacteria and in at least one genus (Paracoccus) of halophilic, denitrifying bacteria. Competent in photosynthetic electron transfer to oxidized cytochrome bc1 complex via the membrane-bound c-type tetraheme. In Rhodoferax fermentans, this protein is High-potential iron-sulfur protein (hip).